The following is a 124-amino-acid chain: Fluoride-specific ion channel FluC (124 aa).

4 helical membrane passes run 4 to 24 (LLLVALGGSIGAVFRYLISIF), 35 to 55 (FGTLLVNVLGSFLMGVIYALG), 60 to 80 (ISPELKALIGVGLLGALTTFS), and 102 to 122 (VVLNLSLCLFMVYLGQQLVFS). Na(+) contacts are provided by G74 and T77.

Belongs to the fluoride channel Fluc/FEX (TC 1.A.43) family.

It localises to the cell inner membrane. The catalysed reaction is fluoride(in) = fluoride(out). Its activity is regulated as follows. Na(+) is not transported, but it plays an essential structural role and its presence is essential for fluoride channel function. In terms of biological role, fluoride-specific ion channel. Important for reducing fluoride concentration in the cell, thus reducing its toxicity. The polypeptide is Fluoride-specific ion channel FluC (Shewanella sp. (strain ANA-3)).